A 154-amino-acid chain; its full sequence is Ribosome maturation factor RimP (154 aa).

The protein belongs to the RimP family.

Its subcellular location is the cytoplasm. In terms of biological role, required for maturation of 30S ribosomal subunits. The polypeptide is Ribosome maturation factor RimP (Salmonella gallinarum (strain 287/91 / NCTC 13346)).